The primary structure comprises 487 residues: WD repeat, SAM and U-box domain-containing protein 1 (487 aa).

WD repeat units follow at residues 10 to 47, 52 to 93, 95 to 134, 137 to 176, 179 to 227, 237 to 276, and 279 to 318; these read SHRDDVNCVAFSGDLLATCSADKSICVYSSRDFSELPF, GHGY…AVLE, PGRSPVRVCAFSPDSSHLVSGGSDGSIALWDFTSRTLRRT, VNDTSIVACSFTPCGQMFITGSTYGDLRLWDLNMNHLHAE, AHDL…SAGI, GQSAPVLSCAYSPDGQMLVSGSVDKTVTVYQADEGVLLYT, and QHDRYVTACAFSPTAPLIATGSMDKSVNIWRMEEGSSAQG. One can recognise an SAM domain in the interval 347–411; it reads WSEEEVLAWL…MKKIEELKMV (65 aa). In terms of domain architecture, U-box spans 416-487; the sequence is GTPDEFLCPI…MAIFRWSTSQ (72 aa).

The protein is WD repeat, SAM and U-box domain-containing protein 1 (wdsub1) of Danio rerio (Zebrafish).